A 306-amino-acid chain; its full sequence is Glutaminase (306 aa).

Residues S64, N115, E159, N166, Y190, Y242, and V260 each coordinate substrate.

The protein belongs to the glutaminase family. As to quaternary structure, homotetramer.

The catalysed reaction is L-glutamine + H2O = L-glutamate + NH4(+). This is Glutaminase from Vibrio parahaemolyticus serotype O3:K6 (strain RIMD 2210633).